The chain runs to 513 residues: CUGBP Elav-like family member 2 (513 aa).

RRM domains lie at 35 to 118 (IKMF…PADS), 127 to 207 (RKLF…FADT), and 428 to 506 (ANLF…LKRS).

It belongs to the CELF/BRUNOL family.

Its subcellular location is the nucleus. It is found in the cytoplasm. In terms of biological role, RNA-binding protein implicated in the regulation of several post-transcriptional events. May be involved in pre-mRNA alternative splicing, mRNA translation repression and stability. The protein is CUGBP Elav-like family member 2 (celf2) of Xenopus tropicalis (Western clawed frog).